The chain runs to 103 residues: Cell division protein CrgA (103 aa).

2 consecutive transmembrane segments (helical) span residues 49 to 69 (FVPL…VYYL) and 80 to 100 (IGAW…LMTM).

It belongs to the CrgA family.

It localises to the cell membrane. Its function is as follows. Involved in cell division. The sequence is that of Cell division protein CrgA from Bifidobacterium longum (strain NCC 2705).